The chain runs to 247 residues: Small ribosomal subunit protein uS2 (247 aa).

The protein belongs to the universal ribosomal protein uS2 family.

The polypeptide is Small ribosomal subunit protein uS2 (Pseudomonas syringae pv. syringae (strain B728a)).